The following is a 577-amino-acid chain: Isocitrate dehydrogenase kinase/phosphatase (577 aa).

ATP is bound by residues 315–321 (APGIRGM) and lysine 336. Aspartate 371 is an active-site residue.

The protein belongs to the AceK family.

It is found in the cytoplasm. It carries out the reaction L-seryl-[isocitrate dehydrogenase] + ATP = O-phospho-L-seryl-[isocitrate dehydrogenase] + ADP + H(+). Its function is as follows. Bifunctional enzyme which can phosphorylate or dephosphorylate isocitrate dehydrogenase (IDH) on a specific serine residue. This is a regulatory mechanism which enables bacteria to bypass the Krebs cycle via the glyoxylate shunt in response to the source of carbon. When bacteria are grown on glucose, IDH is fully active and unphosphorylated, but when grown on acetate or ethanol, the activity of IDH declines drastically concomitant with its phosphorylation. The sequence is that of Isocitrate dehydrogenase kinase/phosphatase from Escherichia fergusonii (strain ATCC 35469 / DSM 13698 / CCUG 18766 / IAM 14443 / JCM 21226 / LMG 7866 / NBRC 102419 / NCTC 12128 / CDC 0568-73).